The chain runs to 115 residues: Class I hydrophobin C (115 aa).

The signal sequence occupies residues 1-19 (MFSRVLVAALVALPVLVSA). Intrachain disulfides connect C36–C93, C43–C87, C44–C74, and C94–C108.

Belongs to the fungal hydrophobin family. Self-assembles to form functional amyloid fibrils called rodlets. Self-assembly into fibrillar rodlets occurs spontaneously at hydrophobic:hydrophilic interfaces and the rodlets further associate laterally to form amphipathic monolayers.

It is found in the secreted. It localises to the cell wall. Its function is as follows. Aerial growth, conidiation, and dispersal of filamentous fungi in the environment rely upon a capability of their secreting small amphipathic proteins called hydrophobins (HPBs) with low sequence identity. Class I can self-assemble into an outermost layer of rodlet bundles on aerial cell surfaces, conferring cellular hydrophobicity that supports fungal growth, development and dispersal; whereas Class II form highly ordered films at water-air interfaces through intermolecular interactions but contribute nothing to the rodlet structure. This is Class I hydrophobin C from Agaricus bisporus (White button mushroom).